The chain runs to 114 residues: Probable acid stress chaperone HdeA (114 aa).

A signal peptide spans Met1–Ala26. An intrachain disulfide couples Cys46 to Cys94.

It belongs to the HdeA family.

Its subcellular location is the periplasm. Its function is as follows. Required for optimal acid stress protection. Exhibits a chaperone-like activity only at low pH by suppressing non-specifically the aggregation of denaturated periplasmic proteins. This Brucella ovis (strain ATCC 25840 / 63/290 / NCTC 10512) protein is Probable acid stress chaperone HdeA.